Reading from the N-terminus, the 353-residue chain is MESFKFKFCLCGDNCPSEREFSKYCVYTDDQQYFYTQKRLIPVIITETKKRVRKYPVNVKYVEIDINDVVDFFEYNIKNYIFTIFRELPIIMSGDCYYESSTIEIIKYIAKNNITNLSIFFIKNSKYFYNNAIFNGICCFSNLDVVKSIIKYIPISLLQNCLNHGFIHSNNDVVEYLLKTYMKYVKCILSKKKIKGTMFHLDSPKTVFLKLRSSLKYLLKLKYQKAMVIYEYIIDQFSQLENDLIETDIENDMIEIRDKIISKIQYNNEIATHILKDSLSYKQDDNLSFTRQLILDGGNLNNICDYAIDLIIMYKNINLLDLMYDKKLICQNDLNHILMSSSKTDPEFIQELI.

Belongs to the mimivirus L17x/L18x family.

This is an uncharacterized protein from Acanthamoeba polyphaga (Amoeba).